We begin with the raw amino-acid sequence, 178 residues long: Probable chorismate pyruvate-lyase (178 aa).

Positions 73, 111, and 163 each coordinate substrate.

This sequence belongs to the UbiC family.

Its subcellular location is the cytoplasm. The catalysed reaction is chorismate = 4-hydroxybenzoate + pyruvate. It participates in cofactor biosynthesis; ubiquinone biosynthesis. Its function is as follows. Removes the pyruvyl group from chorismate, with concomitant aromatization of the ring, to provide 4-hydroxybenzoate (4HB) for the ubiquinone pathway. The chain is Probable chorismate pyruvate-lyase from Pseudomonas aeruginosa (strain UCBPP-PA14).